A 544-amino-acid chain; its full sequence is Chaperonin GroEL (544 aa).

Residues 29–32 (TMGP), lysine 50, 86–90 (DGTTT), glycine 414, 477–479 (NAA), and aspartate 493 each bind ATP. The interval 525 to 544 (DKPAMPSMPDMGGMGMPGMM) is disordered.

The protein belongs to the chaperonin (HSP60) family. Forms a cylinder of 14 subunits composed of two heptameric rings stacked back-to-back. Interacts with the co-chaperonin GroES.

It is found in the cytoplasm. The catalysed reaction is ATP + H2O + a folded polypeptide = ADP + phosphate + an unfolded polypeptide.. Together with its co-chaperonin GroES, plays an essential role in assisting protein folding. The GroEL-GroES system forms a nano-cage that allows encapsulation of the non-native substrate proteins and provides a physical environment optimized to promote and accelerate protein folding. This chain is Chaperonin GroEL, found in Aliarcobacter butzleri (strain RM4018) (Arcobacter butzleri).